A 360-amino-acid polypeptide reads, in one-letter code: 3-dehydroquinate synthase (360 aa).

NAD(+) contacts are provided by residues 71 to 76 (DGEQYK), 105 to 109 (GVIGD), 129 to 130 (TT), K142, K151, and 169 to 172 (CLDT). E184, H247, and H264 together coordinate Zn(2+).

This sequence belongs to the sugar phosphate cyclases superfamily. Dehydroquinate synthase family. The cofactor is Co(2+). Zn(2+) is required as a cofactor. It depends on NAD(+) as a cofactor.

The protein localises to the cytoplasm. The catalysed reaction is 7-phospho-2-dehydro-3-deoxy-D-arabino-heptonate = 3-dehydroquinate + phosphate. Its pathway is metabolic intermediate biosynthesis; chorismate biosynthesis; chorismate from D-erythrose 4-phosphate and phosphoenolpyruvate: step 2/7. Its function is as follows. Catalyzes the conversion of 3-deoxy-D-arabino-heptulosonate 7-phosphate (DAHP) to dehydroquinate (DHQ). This chain is 3-dehydroquinate synthase, found in Erwinia tasmaniensis (strain DSM 17950 / CFBP 7177 / CIP 109463 / NCPPB 4357 / Et1/99).